A 178-amino-acid chain; its full sequence is Large ribosomal subunit protein bL25 (178 aa).

Belongs to the bacterial ribosomal protein bL25 family. CTC subfamily. As to quaternary structure, part of the 50S ribosomal subunit; part of the 5S rRNA/L5/L18/L25 subcomplex. Contacts the 5S rRNA. Binds to the 5S rRNA independently of L5 and L18.

Its function is as follows. This is one of the proteins that binds to the 5S RNA in the ribosome where it forms part of the central protuberance. The protein is Large ribosomal subunit protein bL25 of Helicobacter pylori (strain Shi470).